A 433-amino-acid polypeptide reads, in one-letter code: Hps1-dma1 cluster O-methyltransferase (433 aa).

The interval 36–55 (NGHPERSLNSTDSVRLSDAP) is disordered. Residue Asp-285 coordinates S-adenosyl-L-methionine. His-331 serves as the catalytic Proton acceptor.

Belongs to the class I-like SAM-binding methyltransferase superfamily. Cation-independent O-methyltransferase family. COMT subfamily.

The protein operates within secondary metabolite biosynthesis. Its function is as follows. O-methyltransferase; part of the hps1-dma1 gene cluster that probably mediates the biosynthesis a derivative of cyclopiazonic acid (CPA). The hybrid polyketide synthase-nonribosomal peptide synthetase (PKS-NRPS) nps1 might incorporates acetyl-CoA, malonyl-CoA, and tryptophan (Trp) and utilizes a C-terminal redox-incompetent reductase domain to make and release the tryptophan tetramic acid, cyclo-acetoacetyl-L-tryptophan (c-AATrp), as the first intermediate in the pathway. In addition, the cluster also includes the tryptophan dimethylallyltransferase dma1, the FAD-dependent oxidoreductase toxD, the cytochrome P450 monooxygenase cyp3.1 and the methyltransferase DOTSEDRAFT_139328; the latter 2 being not present in all CPA-producing fungi but involved in additional modifications that occur in biosynthesis the of a range of CPA and CPA-like products. Further studies are required to clarify whether the CPA-like hps1-dma1 cluster is functional or a non-functional relic reflecting evolution of D.septosporum. This is Hps1-dma1 cluster O-methyltransferase from Dothistroma septosporum (strain NZE10 / CBS 128990) (Red band needle blight fungus).